The following is a 365-amino-acid chain: Homeobox protein knotted-1-like 7 (365 aa).

A compositionally biased stretch (basic and acidic residues) spans 1–11 (MEELEGHRGEG). A disordered region spans residues 1–20 (MEELEGHRGEGRLPPPPPLL). The 21-residue stretch at 227-247 (ALKRHLLRKYSGYLGGLRKEL) folds into the ELK domain. A DNA-binding region (homeobox; TALE-type) is located at residues 248–311 (SKKRKKGKLP…NQRKRHWKPT (64 aa)).

This sequence belongs to the TALE/KNOX homeobox family.

The protein localises to the nucleus. In terms of biological role, probable transcription factor that may be involved in shoot formation during embryogenesis. The sequence is that of Homeobox protein knotted-1-like 7 (OSH3) from Oryza sativa subsp. japonica (Rice).